The chain runs to 117 residues: UPF0122 protein Cthe_0771 (117 aa).

This sequence belongs to the UPF0122 family.

Its function is as follows. Might take part in the signal recognition particle (SRP) pathway. This is inferred from the conservation of its genetic proximity to ftsY/ffh. May be a regulatory protein. This Acetivibrio thermocellus (strain ATCC 27405 / DSM 1237 / JCM 9322 / NBRC 103400 / NCIMB 10682 / NRRL B-4536 / VPI 7372) (Clostridium thermocellum) protein is UPF0122 protein Cthe_0771.